The chain runs to 609 residues: Pescadillo homolog (609 aa).

A BRCT domain is found at 320–413 (KLKNLFKGLK…KLLPTNKYFI (94 aa)). 2 disordered regions span residues 443-462 (DEFE…DEDF) and 488-609 (ALNS…EILA). Composition is skewed to basic and acidic residues over residues 444–453 (EFEKQERAEG) and 488–498 (ALNSGEAKKEQ). Residues 481-509 (FREEKAEALNSGEAKKEQAEEDNEDDDQE) are a coiled coil. The segment covering 499–512 (AEEDNEDDDQEPDQ) has biased composition (acidic residues). Composition is skewed to basic and acidic residues over residues 513-524 (DETKKQRSEKKQ) and 533-552 (VFKE…EALR). A coiled-coil region spans residues 539–607 (KEQKQLTKQE…QKRKAQRKEI (69 aa)). A compositionally biased stretch (basic residues) spans 554-564 (KMVKSRHKKLY). Residues 567-609 (LLDKQKKATKEANLLREKRQQIDKQKRKEQTQKRKAQRKEILA) show a composition bias toward basic and acidic residues.

This sequence belongs to the pescadillo family.

It is found in the nucleus. The protein resides in the nucleolus. Its subcellular location is the nucleoplasm. Required for maturation of ribosomal RNAs and formation of the large ribosomal subunit. In Aedes aegypti (Yellowfever mosquito), this protein is Pescadillo homolog.